The chain runs to 210 residues: MSSAQNIKKSILAPVLDNNPIALQVLGVCSALAVTTKLETAFVMTLAVTFVTALSNFFVSVIRNHIPNSVRIIVQMAIIASLVIVVDQILKAYLYDISKQLSVFVGLIITNCIVMGRAEAFAMKSAPVPSLIDGIGNGLGYGFVLITVGFFRELFGSGKLFGMEVLPLVNNGGWYQPNGLMLLAPSAFFLIGFMIWAIRTFKPEQVEAKE.

A run of 5 helical transmembrane segments spans residues 42–62 (FVMT…VSVI), 72–92 (IIVQ…ILKA), 103–123 (VFVG…AFAM), 131–151 (LIDG…VGFF), and 178–198 (NGLM…IWAI).

Belongs to the NqrDE/RnfAE family. Composed of six subunits; NqrA, NqrB, NqrC, NqrD, NqrE and NqrF.

It localises to the cell inner membrane. It catalyses the reaction a ubiquinone + n Na(+)(in) + NADH + H(+) = a ubiquinol + n Na(+)(out) + NAD(+). NQR complex catalyzes the reduction of ubiquinone-1 to ubiquinol by two successive reactions, coupled with the transport of Na(+) ions from the cytoplasm to the periplasm. NqrA to NqrE are probably involved in the second step, the conversion of ubisemiquinone to ubiquinol. The sequence is that of Na(+)-translocating NADH-quinone reductase subunit D from Vibrio vulnificus (strain YJ016).